We begin with the raw amino-acid sequence, 89 residues long: Prostaglandin E2 receptor EP3 subtype (89 aa).

Residues 1 to 18 (GVWLAVLAFALLPVLGVG) form a helical membrane-spanning segment. The Extracellular portion of the chain corresponds to 19-48 (QYTIQWPGTWCFISTGPGGNGTNSRQNWGN). N-linked (GlcNAc...) asparagine glycosylation is present at asparagine 38. A helical transmembrane segment spans residues 49 to 74 (VFFASDFAILGLSALVVTFACNLATI). Over 75-89 (KALVSRCRAKATASQ) the chain is Cytoplasmic.

The protein belongs to the G-protein coupled receptor 1 family. In terms of assembly, interacts (via C-terminus) with MKLN1.

It is found in the cell membrane. Its function is as follows. Receptor for prostaglandin E2 (PGE2). Required for normal development of fever in response to pyrinogens, including IL1B, prostaglandin E2 and bacterial lipopolysaccharide (LPS). Required for normal potentiation of platelet aggregation by prostaglandin E2, and thus plays a role in the regulation of blood coagulation. Required for increased HCO3(-) secretion in the duodenum in response to mucosal acidification, and thereby contributes to the protection of the mucosa against acid-induced ulceration. Not required for normal kidney function, normal urine volume and osmolality. This is Prostaglandin E2 receptor EP3 subtype (PTGER3) from Ovis aries (Sheep).